The following is a 76-amino-acid chain: Protein CYSTEINE-RICH TRANSMEMBRANE MODULE 11 (76 aa).

The segment at 19 to 45 (GPPPPVGVPPQYYPPPPPPPPPPPPPR) is disordered. A helical transmembrane segment spans residues 47 to 63 (VGFLEGLLAALCCCCLV).

This sequence belongs to the CYSTM1 family. As to quaternary structure, heterodimers. Interacts with CYSTM6, CYSTM7 and WIH1/CYSTM13. As to expression, mostly expressed in stems, siliques, leaves and flowers and, to a lower extent, in roots.

The protein localises to the cell membrane. It is found in the cytoplasm. Functionally, involved in resistance to abiotic stress. This Arabidopsis thaliana (Mouse-ear cress) protein is Protein CYSTEINE-RICH TRANSMEMBRANE MODULE 11.